A 432-amino-acid chain; its full sequence is 3-phosphoshikimate 1-carboxyvinyltransferase (432 aa).

Lysine 23, serine 24, and arginine 28 together coordinate 3-phosphoshikimate. Phosphoenolpyruvate is bound at residue lysine 23. Residues glycine 95 and arginine 123 each contribute to the phosphoenolpyruvate site. Positions 167, 169, 317, and 344 each coordinate 3-phosphoshikimate. Glutamine 169 lines the phosphoenolpyruvate pocket. The active-site Proton acceptor is aspartate 317. Phosphoenolpyruvate contacts are provided by arginine 348 and arginine 390.

Belongs to the EPSP synthase family. In terms of assembly, monomer.

Its subcellular location is the cytoplasm. The catalysed reaction is 3-phosphoshikimate + phosphoenolpyruvate = 5-O-(1-carboxyvinyl)-3-phosphoshikimate + phosphate. The protein operates within metabolic intermediate biosynthesis; chorismate biosynthesis; chorismate from D-erythrose 4-phosphate and phosphoenolpyruvate: step 6/7. Its function is as follows. Catalyzes the transfer of the enolpyruvyl moiety of phosphoenolpyruvate (PEP) to the 5-hydroxyl of shikimate-3-phosphate (S3P) to produce enolpyruvyl shikimate-3-phosphate and inorganic phosphate. This Staphylococcus carnosus (strain TM300) protein is 3-phosphoshikimate 1-carboxyvinyltransferase.